Reading from the N-terminus, the 499-residue chain is Ammonium transporter MEP2 (499 aa).

Residues 1–31 (MSYNFTGTPTGEGTGGNSLTTDLNTQFDLAN) lie on the Extracellular side of the membrane. The N-linked (GlcNAc...) asparagine glycan is linked to Asn-4. The helical transmembrane segment at 32-52 (MGWIGVASAGVWIMVPGIGLL) threads the bilayer. Topologically, residues 53–62 (YSGLSRKKHA) are cytoplasmic. A helical membrane pass occupies residues 63-83 (LSLLWASMMASAVCIFQWFFW). Topologically, residues 84-122 (GYSLAFSHNTRGNGFIGTLEFFGFRNVLGAPSSVSSLPD) are extracellular. A helical membrane pass occupies residues 123 to 143 (ILFAVYQGMFAAVTGALMLGG). Topologically, residues 144–152 (ACERARLFP) are cytoplasmic. A helical transmembrane segment spans residues 153–173 (MMVFLFLWMTIVYCPIACWVW). The Extracellular segment spans residues 174–187 (NAEGWLVKLGSLDY). The helical transmembrane segment at 188–208 (AGGLCVHLTSGHGGLVYALIL) threads the bilayer. Residues 209 to 230 (GKRNDPVTRKGMPKYKPHSVTS) are Cytoplasmic-facing. Residues 231 to 251 (VVLGTVFLWFGWMFFNGGSAG) form a helical membrane-spanning segment. Residues 252–257 (NATIRA) are Extracellular-facing. The helical transmembrane segment at 258 to 278 (WYSIMSTNLAAACGGLTWMVI) threads the bilayer. Topologically, residues 279-289 (DYFRCGRKWTT) are cytoplasmic. A helical membrane pass occupies residues 290 to 312 (VGLCSGIIAGLVGITPAAGFVPI). The Extracellular portion of the chain corresponds to 313 to 315 (WSA). A helical transmembrane segment spans residues 316-338 (VVIGVVTGAGCNLAVDLKSLLRI). Topologically, residues 339-346 (DDGLDCYS) are cytoplasmic. The chain crosses the membrane as a helical span at residues 347–367 (IHGVGGCIGSVLTGIFAADYV). Residues 368–393 (NATAGSYISPIDGGWINHHYKQVGYQ) are Extracellular-facing. The helical transmembrane segment at 394-414 (LAGICAALAWTVTVTSILLLT) threads the bilayer. At 415-499 (MNAIPFLKLR…SSTKNTDHIV (85 aa)) the chain is on the cytoplasmic side. The tract at residues 428-441 (DEEELGTDAAQIGE) is enhancer domain. The segment at 442 to 449 (FTYEESTA) is linker domain. The autoinhibitory domain stretch occupies residues 450–485 (YIPEPIRSKTSAQMPPPHENIDDKIVGNTDAEKNST). The segment at 455 to 499 (IRSKTSAQMPPPHENIDDKIVGNTDAEKNSTPSDASSTKNTDHIV) is disordered. The residue at position 457 (Ser-457) is a Phosphoserine. A compositionally biased stretch (basic and acidic residues) spans 468–482 (ENIDDKIVGNTDAEK). Over residues 483–493 (NSTPSDASSTK) the composition is skewed to polar residues.

The protein belongs to the ammonia transporter channel (TC 1.A.11.2) family. In terms of processing, phosphorylated at Ser-457 by the TORC1 effector kinase NPR1 under nitrogen-limiting conditions which causes a conformational change in the C-terminal region (CTR) to form an open active conformation. Supplementation of nitrogen source leads to inactivation and instant Ser-457 dephosphorylation via plasma membrane PSR1 and PSR2 redundant phosphatases. Post-translationally, the residue Asn-4 of the protein's N-terminal tail is the only site that is glycosylated.

Its subcellular location is the cell membrane. Functionally, transporter for ammonium (both charged and uncharged NH3 and NH4) to use as a nitrogen source. The affinity of MEP2 is about twenty times higher than that of MEP1. MEP3 has the lowest affinity. Under ammonium limitation acts as an ammonium sensor, generating a signal that leads to pseudohyphal (filamentous) growth. The polypeptide is Ammonium transporter MEP2 (Saccharomyces cerevisiae (strain ATCC 204508 / S288c) (Baker's yeast)).